The primary structure comprises 313 residues: Non-functional target of rapamycin complex subunit LST8-2 (313 aa).

WD repeat units follow at residues 1-35, 38-76, 82-121, 123-162, 166-205, 215-255, and 258-297; these read MFEN…CYFS, YPDL…PHIP, SHTK…CQRE, RSVS…CSCE, EVGT…QTMT, AHNS…LEKV, and GHER…EEMV.

This sequence belongs to the WD repeat LST8 family.

Functionally, probable non-functional protein. The protein is Non-functional target of rapamycin complex subunit LST8-2 of Arabidopsis thaliana (Mouse-ear cress).